We begin with the raw amino-acid sequence, 1082 residues long: Protein SPT23 (1082 aa).

3 disordered regions span residues 315-346, 376-417, and 457-476; these read NASN…PQSD, NNNN…FSDI, and ASAR…FMST. Low complexity predominate over residues 316 to 328; it reads ASNTTTPTSTSNA. Polar residues predominate over residues 329–346; that stretch reads QVSPMTNDTRSFSSPQSD. Low complexity-rich tracts occupy residues 376–391 and 399–416; these read NNNN…KTNT and HFPS…SFSD. Serine 468 bears the Phosphoserine mark. Residues 508-585 enclose the IPT/TIG domain; the sequence is PSIQRVIPAQ…DPSETSMRNN (78 aa). ANK repeat units follow at residues 709 to 738 and 742 to 771; these read RGRT…HLND and FGFT…NIMK.

Functionally, dosage-dependent suppressor of Ty-induced promoter mutations. May exert its suppression effect through protein-protein interactions since does not present any of the motifs generally found in transcriptional activators or DNA binding proteins. In Saccharomyces cerevisiae (strain ATCC 204508 / S288c) (Baker's yeast), this protein is Protein SPT23 (SPT23).